Reading from the N-terminus, the 325-residue chain is Eukaryotic translation initiation factor 3 subunit I (325 aa).

WD repeat units follow at residues 1–39, 43–81, 87–127, 135–175, and 180–217; these read MKPILLQGHERSITQIKYNREGDLLFTVAKDPIVNVWYS, ERLGTYMGHTGAVWCVDADWDTKHVLTGSADNSCRLWDC, LALL…FFDL, NNEP…QYSA, and VLVNVKEHSRQINDIQLSRDMTMFVTASKDNTAKLFDS. Threonine 219 carries the post-translational modification Phosphothreonine. 2 WD repeats span residues 221–267 and 275–316; these read EHQK…KFEA and EEEF…YFDP. Lysine 264 carries the N6-acetyllysine modification. Lysine 282 is covalently cross-linked (Glycyl lysine isopeptide (Lys-Gly) (interchain with G-Cter in ubiquitin)). The residue at position 308 (tyrosine 308) is a Phosphotyrosine.

As to quaternary structure, component of the eukaryotic translation initiation factor 3 (eIF-3) complex, which is composed of 13 subunits: EIF3A, EIF3B, EIF3C, EIF3D, EIF3E, EIF3F, EIF3G, EIF3H, EIF3I, EIF3J, EIF3K, EIF3L and EIF3M. The eIF-3 complex appears to include 3 stable modules: module A is composed of EIF3A, EIF3B, EIF3G and EIF3I; module B is composed of EIF3F, EIF3H, and EIF3M; and module C is composed of EIF3C, EIF3D, EIF3E, EIF3K and EIF3L. EIF3C of module C binds EIF3B of module A and EIF3H of module B, thereby linking the three modules. EIF3J is a labile subunit that binds to the eIF-3 complex via EIF3B. The eIF-3 complex interacts with RPS6KB1 under conditions of nutrient depletion. Mitogenic stimulation leads to binding and activation of a complex composed of MTOR and RPTOR, leading to phosphorylation and release of RPS6KB1 and binding of EIF4B to eIF-3. In terms of processing, phosphorylated by TGF-beta type II receptor.

The protein resides in the cytoplasm. Component of the eukaryotic translation initiation factor 3 (eIF-3) complex, which is required for several steps in the initiation of protein synthesis. The eIF-3 complex associates with the 40S ribosome and facilitates the recruitment of eIF-1, eIF-1A, eIF-2:GTP:methionyl-tRNAi and eIF-5 to form the 43S pre-initiation complex (43S PIC). The eIF-3 complex stimulates mRNA recruitment to the 43S PIC and scanning of the mRNA for AUG recognition. The eIF-3 complex is also required for disassembly and recycling of post-termination ribosomal complexes and subsequently prevents premature joining of the 40S and 60S ribosomal subunits prior to initiation. The eIF-3 complex specifically targets and initiates translation of a subset of mRNAs involved in cell proliferation, including cell cycling, differentiation and apoptosis, and uses different modes of RNA stem-loop binding to exert either translational activation or repression. The polypeptide is Eukaryotic translation initiation factor 3 subunit I (Homo sapiens (Human)).